Consider the following 286-residue polypeptide: L-ribulose 3-epimerase (286 aa).

Residues His-12, Ser-69, Glu-152, and Glu-158 each contribute to the D-allulose site. Residues His-12, Ser-69, Glu-152, and Glu-158 each coordinate D-fructose. Residue Glu-152 is the Proton donor/acceptor of the active site. Glu-152 serves as a coordination point for Mn(2+). Residue Asp-185 coordinates Mn(2+). Positions 188, 211, 217, and 246 each coordinate D-allulose. D-fructose-binding residues include His-188, His-211, Arg-217, and Glu-246. Residue His-211 participates in Mn(2+) binding. The active-site Proton donor/acceptor is the Glu-246. Glu-246 contributes to the Mn(2+) binding site.

This sequence belongs to the hyi family. In terms of assembly, homodimer. The cofactor is Mn(2+).

The enzyme catalyses L-ribulose = L-xylulose. It catalyses the reaction D-ribulose = D-xylulose. The catalysed reaction is D-allulose = keto-D-fructose. It carries out the reaction keto-L-tagatose = keto-L-sorbose. The enzyme catalyses keto-D-tagatose = keto-D-sorbose. Its function is as follows. Catalyzes the epimerization of various ketoses at the C(3) position. Exhibits the highest enzymatic activity toward L-ribulose, followed by D-ribulose, D-allulose and D-fructose. Shows lower activity with L-xylulose, L-tagatose, D-xylulose, D-tagatose, L-sorbose, D-sorbose, and weak activity with L-allulose and L-fructose. The polypeptide is L-ribulose 3-epimerase (Methylomonas sp. (strain DH-1)).